A 411-amino-acid chain; its full sequence is Protein Brevis radix-like 2 (411 aa).

2 disordered regions span residues 10–31 (KDGG…KSLT) and 103–149 (AAPS…DDDE). Residues 20-31 (ATATPNSGKSLT) are compositionally biased toward polar residues. A compositionally biased stretch (acidic residues) spans 136–149 (GEEDYDDDDDDDDE). The BRX 1 domain maps to 161–217 (REWTAQVEPGVQITFVSIPGGAGNDLKRIRFSREMFNKWEAQRWWGENYDRVVELYN). Disordered stretches follow at residues 245 to 294 (SRVG…VAAA) and 324 to 346 (AGPA…ASVS). The segment covering 276 to 294 (SRTASSKAQLSSSSSVAAA) has biased composition (low complexity). Residues 356–411 (TEWVEQDEPGVSITIREFGDGTRELRRVRFSRERFGEERAKVWWEQNRDRIHAQYL) form the BRX 2 domain.

This sequence belongs to the BRX family.

The protein resides in the nucleus. The polypeptide is Protein Brevis radix-like 2 (BRXL2) (Oryza sativa subsp. japonica (Rice)).